The chain runs to 85 residues: MAFAQAGGGGGQRRPFFRRRKTCPFSGPNAPKIDYKDVRLLQRYISERGKIVPSRITAVSAKKQRELSAAIKRARFLGLLPFVIR.

Over residues 1–12 the composition is skewed to gly residues; it reads MAFAQAGGGGGQ. Residues 1–22 are disordered; sequence MAFAQAGGGGGQRRPFFRRRKT.

This sequence belongs to the bacterial ribosomal protein bS18 family. Part of the 30S ribosomal subunit. Forms a tight heterodimer with protein bS6.

Its function is as follows. Binds as a heterodimer with protein bS6 to the central domain of the 16S rRNA, where it helps stabilize the platform of the 30S subunit. The polypeptide is Small ribosomal subunit protein bS18 (Azorhizobium caulinodans (strain ATCC 43989 / DSM 5975 / JCM 20966 / LMG 6465 / NBRC 14845 / NCIMB 13405 / ORS 571)).